A 223-amino-acid polypeptide reads, in one-letter code: Urease accessory protein UreF (223 aa).

Belongs to the UreF family. As to quaternary structure, ureD, UreF and UreG form a complex that acts as a GTP-hydrolysis-dependent molecular chaperone, activating the urease apoprotein by helping to assemble the nickel containing metallocenter of UreC. The UreE protein probably delivers the nickel.

The protein localises to the cytoplasm. Required for maturation of urease via the functional incorporation of the urease nickel metallocenter. This Pseudomonas paraeruginosa (strain DSM 24068 / PA7) (Pseudomonas aeruginosa (strain PA7)) protein is Urease accessory protein UreF.